The primary structure comprises 428 residues: Dihydroorotase (428 aa).

Zn(2+) is bound by residues H59 and H61. Substrate-binding positions include 61-63 and N93; that span reads HLR. Zn(2+) is bound by residues D151, H178, and H231. N277 lines the substrate pocket. D304 serves as a coordination point for Zn(2+). The active site involves D304. Residues H308 and 322 to 323 contribute to the substrate site; that span reads FG.

The protein belongs to the metallo-dependent hydrolases superfamily. DHOase family. Class I DHOase subfamily. Zn(2+) is required as a cofactor.

The catalysed reaction is (S)-dihydroorotate + H2O = N-carbamoyl-L-aspartate + H(+). Its pathway is pyrimidine metabolism; UMP biosynthesis via de novo pathway; (S)-dihydroorotate from bicarbonate: step 3/3. In terms of biological role, catalyzes the reversible cyclization of carbamoyl aspartate to dihydroorotate. This chain is Dihydroorotase, found in Bacillus pumilus (strain SAFR-032).